The chain runs to 769 residues: Non-secreted LysM effector LysM17 (769 aa).

A helical transmembrane segment spans residues 173 to 193; it reads LPPLATAIPLAVVWASLASVI. 4 N-linked (GlcNAc...) asparagine glycosylation sites follow: Asn-305, Asn-368, Asn-423, and Asn-452. LysM domains lie at 498 to 543 and 562 to 610; these read RTIQ…HVCC and YSNL…KICL. Asn-631, Asn-671, Asn-706, and Asn-734 each carry an N-linked (GlcNAc...) asparagine glycan.

Belongs to the secreted LysM effector family.

It localises to the membrane. Non-secreted LysM effector that might be involved in manipulation of host defenses for successful infection. The sequence is that of Non-secreted LysM effector LysM17 from Penicillium expansum (Blue mold rot fungus).